The chain runs to 467 residues: Glutamate--tRNA ligase (467 aa).

The 'HIGH' region motif lies at Pro-9–Gly-19. The short motif at Lys-237–Arg-241 is the 'KMSKS' region element. Lys-240 is an ATP binding site.

This sequence belongs to the class-I aminoacyl-tRNA synthetase family. Glutamate--tRNA ligase type 1 subfamily. Monomer.

It is found in the cytoplasm. It catalyses the reaction tRNA(Glu) + L-glutamate + ATP = L-glutamyl-tRNA(Glu) + AMP + diphosphate. In terms of biological role, catalyzes the attachment of glutamate to tRNA(Glu) in a two-step reaction: glutamate is first activated by ATP to form Glu-AMP and then transferred to the acceptor end of tRNA(Glu). In Xanthomonas oryzae pv. oryzae (strain MAFF 311018), this protein is Glutamate--tRNA ligase.